The sequence spans 627 residues: (-)-alpha-pinene synthase 2, chloroplastic (627 aa).

Residues 1 to 36 constitute a chloroplast transit peptide; it reads MALVSVAPMASRSCLHKSLSSSAHELKTICRTIPTL. Positions 378, 382, and 530 each coordinate Mg(2+). A DDXXD motif motif is present at residues 378-382; that stretch reads DDMYD.

The protein belongs to the terpene synthase family. Tpsd subfamily. Requires Mg(2+) as cofactor. Mn(2+) serves as cofactor.

The protein localises to the plastid. It localises to the chloroplast. It catalyses the reaction (2E)-geranyl diphosphate = (1S,5S)-alpha-pinene + diphosphate. The catalysed reaction is (2E)-geranyl diphosphate = (1S,5S)-beta-pinene + diphosphate. Its pathway is terpene metabolism; oleoresin biosynthesis. In terms of biological role, involved in defensive oleoresin formation in conifers in response to insect attack or other injury. Involved in monoterpene (C10) olefins biosynthesis. A mixture of alpha- and beta-pinene (35:10) is produced by this enzyme. In Picea sitchensis (Sitka spruce), this protein is (-)-alpha-pinene synthase 2, chloroplastic.